Consider the following 405-residue polypeptide: Methylamine dehydrogenase heavy chain (405 aa).

The signal sequence occupies residues 1-36 (MTTFDHPSMIRQPKPTGLAGGLVLAALMLSSSLALA).

This sequence belongs to the aromatic amine dehydrogenase heavy chain family. As to quaternary structure, tetramer of two light and two heavy chains.

Its subcellular location is the periplasm. It catalyses the reaction 2 oxidized [amicyanin] + methylamine + H2O = 2 reduced [amicyanin] + formaldehyde + NH4(+) + 2 H(+). Its function is as follows. Methylamine dehydrogenase carries out the oxidation of methylamine. Electrons are passed from methylamine dehydrogenase to amicyanin. The chain is Methylamine dehydrogenase heavy chain (mauB) from Methylophilus methylotrophus (Bacterium W3A1).